Here is a 141-residue protein sequence, read N- to C-terminus: Nucleoside diphosphate kinase (141 aa).

Residues K9, F57, R85, T91, R102, and N112 each contribute to the ATP site. H115 functions as the Pros-phosphohistidine intermediate in the catalytic mechanism.

This sequence belongs to the NDK family. Homotetramer. Requires Mg(2+) as cofactor.

The protein resides in the cytoplasm. The enzyme catalyses a 2'-deoxyribonucleoside 5'-diphosphate + ATP = a 2'-deoxyribonucleoside 5'-triphosphate + ADP. It catalyses the reaction a ribonucleoside 5'-diphosphate + ATP = a ribonucleoside 5'-triphosphate + ADP. Its function is as follows. Major role in the synthesis of nucleoside triphosphates other than ATP. The ATP gamma phosphate is transferred to the NDP beta phosphate via a ping-pong mechanism, using a phosphorylated active-site intermediate. In Chlamydia abortus (strain DSM 27085 / S26/3) (Chlamydophila abortus), this protein is Nucleoside diphosphate kinase.